We begin with the raw amino-acid sequence, 190 residues long: Elongation factor P 2 (190 aa).

This sequence belongs to the elongation factor P family.

It localises to the cytoplasm. The protein operates within protein biosynthesis; polypeptide chain elongation. Involved in peptide bond synthesis. Stimulates efficient translation and peptide-bond synthesis on native or reconstituted 70S ribosomes in vitro. Probably functions indirectly by altering the affinity of the ribosome for aminoacyl-tRNA, thus increasing their reactivity as acceptors for peptidyl transferase. The chain is Elongation factor P 2 (efp2) from Chlamydia trachomatis serovar D (strain ATCC VR-885 / DSM 19411 / UW-3/Cx).